The following is a 957-amino-acid chain: AP2-associated protein kinase 1 (957 aa).

N-acetylmethionine is present on M1. The span at 1-11 (MKKFFDSRREQ) shows a compositional bias: basic and acidic residues. A disordered region spans residues 1–25 (MKKFFDSRREQGGSGLGSGSSGGGG). Residues 12 to 25 (GGSGLGSGSSGGGG) are compositionally biased toward gly residues. At S14 the chain carries Phosphoserine. A Protein kinase domain is found at 46–315 (VTVDEVLAEG…QVSYFSFKLL (270 aa)). Residues 52–60 (LAEGGFAIV) and K74 each bind ATP. The active-site Proton acceptor is the D176. Y234 bears the Phosphotyrosine mark. Phosphoserine is present on S235. Disordered stretches follow at residues 326-506 (NSPI…AVHP) and 563-629 (TAAA…AGHR). 2 positions are modified to phosphothreonine: T354 and T389. R391 carries the omega-N-methylarginine modification. The segment covering 436-448 (PQAPPTSQQPPSA) has biased composition (pro residues). T441 is subject to Phosphothreonine. 2 stretches are compositionally biased toward low complexity: residues 449–506 (PAQA…AVHP) and 563–601 (TAAAAPQPQAQPAAAASPAPAQEPAQIQAPVRQQPKVQT). T602 bears the Phosphothreonine mark. Residues 607–617 (IQGQKLGSLTP) show a composition bias toward polar residues. S614 is modified (phosphoserine). A Phosphothreonine modification is found at T616. Residues S619, S620, S633, and S646 each carry the phosphoserine modification. T649 carries the phosphothreonine modification. Residues 660 to 697 (SLNKSKSATTTPSGSPRASQQNVYNPSEGSTWNPFDDD) form a disordered region. The span at 668 to 692 (TTTPSGSPRASQQNVYNPSEGSTWN) shows a compositional bias: polar residues. A Phosphotyrosine modification is found at Y683. A phosphoserine mark is found at S727, S842, S933, and S934. A clathrin-binding domain (CBD) region spans residues 819 to 956 (EKADVAVESL…SLLLVDQLID (138 aa)). Disordered regions lie at residues 832–855 (LEPPVPQRLPSQTESVTSNRTDSL) and 919–941 (VLITKNPQGGHSRNSSGSSESSL). The segment covering 840–855 (LPSQTESVTSNRTDSL) has biased composition (polar residues). Low complexity predominate over residues 927–940 (GGHSRNSSGSSESS).

This sequence belongs to the protein kinase superfamily. Ser/Thr protein kinase family. As to quaternary structure, interacts (via CBD domain) with clathrin. Interacts with AP-2 complex. Interacts with NUMB. Interacts with alpha-adaptin. Interacts with EPS15 isoform 2. Interacts with membrane-bound activated NOTCH1 but not with the inactive full-length form of NOTCH1. Preferentially interacts with monoubiquitinated activated NOTCH1 compared to the non-ubiquitinated form. In terms of processing, autophosphorylated. In terms of tissue distribution, detected in brain (at protein level).

Its subcellular location is the cell membrane. It is found in the membrane. It localises to the clathrin-coated pit. The protein resides in the presynapse. The enzyme catalyses L-seryl-[protein] + ATP = O-phospho-L-seryl-[protein] + ADP + H(+). It catalyses the reaction L-threonyl-[protein] + ATP = O-phospho-L-threonyl-[protein] + ADP + H(+). Stimulated by clathrin. In terms of biological role, regulates clathrin-mediated endocytosis by phosphorylating the AP2M1/mu2 subunit of the adaptor protein complex 2 (AP-2) which ensures high affinity binding of AP-2 to cargo membrane proteins during the initial stages of endocytosis. Preferentially, may phosphorylate substrates on threonine residues. Regulates phosphorylation of other AP-2 subunits as well as AP-2 localization and AP-2-mediated internalization of ligand complexes. Phosphorylates NUMB and regulates its cellular localization, promoting NUMB localization to endosomes. Binds to and stabilizes the activated form of NOTCH1, increases its localization in endosomes and regulates its transcriptional activity. The polypeptide is AP2-associated protein kinase 1 (AAK1) (Bos taurus (Bovine)).